We begin with the raw amino-acid sequence, 517 residues long: Ribonuclease Y (517 aa).

The chain crosses the membrane as a helical span at residues 1 to 21 (MIEVLIGLGAGVAGVGAGYLY). Residues 207 to 273 (LINVVNIKND…TRVIELLVED (67 aa)) form the KH domain. The 94-residue stretch at 333–426 (ALAHSLEVAH…VCAADCLSAA (94 aa)) folds into the HD domain.

The protein belongs to the RNase Y family.

It localises to the cell membrane. In terms of biological role, endoribonuclease that initiates mRNA decay. This chain is Ribonuclease Y, found in Campylobacter curvus (strain 525.92).